Reading from the N-terminus, the 449-residue chain is tRNA-2-methylthio-N(6)-dimethylallyladenosine synthase (449 aa).

Positions Lys-3–Ser-124 constitute an MTTase N-terminal domain. Residues Cys-12, Cys-48, Cys-87, Cys-163, Cys-167, and Cys-170 each contribute to the [4Fe-4S] cluster site. A Radical SAM core domain is found at Lys-149–Glu-380. Residues Gln-383–Ala-447 form the TRAM domain.

The protein belongs to the methylthiotransferase family. MiaB subfamily. In terms of assembly, monomer. The cofactor is [4Fe-4S] cluster.

The protein localises to the cytoplasm. The catalysed reaction is N(6)-dimethylallyladenosine(37) in tRNA + (sulfur carrier)-SH + AH2 + 2 S-adenosyl-L-methionine = 2-methylsulfanyl-N(6)-dimethylallyladenosine(37) in tRNA + (sulfur carrier)-H + 5'-deoxyadenosine + L-methionine + A + S-adenosyl-L-homocysteine + 2 H(+). Functionally, catalyzes the methylthiolation of N6-(dimethylallyl)adenosine (i(6)A), leading to the formation of 2-methylthio-N6-(dimethylallyl)adenosine (ms(2)i(6)A) at position 37 in tRNAs that read codons beginning with uridine. The chain is tRNA-2-methylthio-N(6)-dimethylallyladenosine synthase from Orientia tsutsugamushi (strain Ikeda) (Rickettsia tsutsugamushi).